The primary structure comprises 224 residues: UPF0758 protein VV1_0825 (224 aa).

The tract at residues 1-20 is disordered; sequence MSLKNLPSESMPREKLLQRG. An MPN domain is found at 102–224; that stretch reads ALTSPQHTKL…VVSFAERGWI (123 aa). Zn(2+) is bound by residues histidine 173, histidine 175, and aspartate 186. The JAMM motif signature appears at 173–186; it reads HNHPSGVAEPSQAD.

Belongs to the UPF0758 family.

The sequence is that of UPF0758 protein VV1_0825 from Vibrio vulnificus (strain CMCP6).